The primary structure comprises 204 residues: Large ribosomal subunit protein uL4 (204 aa).

Residues 49 to 72 form a disordered region; it reads QKNRAAVSGGGKKPWRQKGTGRAR.

This sequence belongs to the universal ribosomal protein uL4 family. Part of the 50S ribosomal subunit.

In terms of biological role, one of the primary rRNA binding proteins, this protein initially binds near the 5'-end of the 23S rRNA. It is important during the early stages of 50S assembly. It makes multiple contacts with different domains of the 23S rRNA in the assembled 50S subunit and ribosome. Its function is as follows. Forms part of the polypeptide exit tunnel. The protein is Large ribosomal subunit protein uL4 of Saccharophagus degradans (strain 2-40 / ATCC 43961 / DSM 17024).